Reading from the N-terminus, the 280-residue chain is Biotin carboxyl carrier protein of acetyl-CoA carboxylase 1, chloroplastic (280 aa).

The transit peptide at 1–82 (MASSSFSVTS…SNAAKVDGPS (82 aa)) directs the protein to the chloroplast. Residues 52–75 (PSRSSYPVVKAQSNKVSTGASSNA) show a composition bias toward polar residues. Disordered stretches follow at residues 52–106 (PSRS…ATEE) and 164–215 (QPSY…GTFY). Residues 177-188 (PAAAAPAPSTPA) show a composition bias toward low complexity. The span at 189–198 (SLPPPSPPTP) shows a compositional bias: pro residues. The Biotinyl-binding domain maps to 203-279 (LPTVKSPMAG…SLDTPLFVVQ (77 aa)). Lys245 carries the N6-biotinyllysine modification.

In terms of assembly, acetyl-CoA carboxylase is a heterohexamer composed of biotin carboxyl carrier protein, biotin carboxylase and 2 subunits each of ACCase subunit alpha and ACCase plastid-coded subunit beta (accD). In terms of tissue distribution, present in developing tissues from roots, leaves, flowers, siliques and seeds (at protein level).

It localises to the plastid. The protein resides in the chloroplast. It participates in lipid metabolism; fatty acid biosynthesis. This protein is a component of the acetyl coenzyme A carboxylase complex; first, biotin carboxylase catalyzes the carboxylation of the carrier protein and then the transcarboxylase transfers the carboxyl group to form malonyl-CoA. The polypeptide is Biotin carboxyl carrier protein of acetyl-CoA carboxylase 1, chloroplastic (BCCP1) (Arabidopsis thaliana (Mouse-ear cress)).